The following is a 159-amino-acid chain: Ribosomal RNA large subunit methyltransferase H (159 aa).

S-adenosyl-L-methionine-binding positions include Leu76, Gly108, and 127–132 (FGLLTL).

It belongs to the RNA methyltransferase RlmH family. Homodimer.

The protein resides in the cytoplasm. The enzyme catalyses pseudouridine(1915) in 23S rRNA + S-adenosyl-L-methionine = N(3)-methylpseudouridine(1915) in 23S rRNA + S-adenosyl-L-homocysteine + H(+). In terms of biological role, specifically methylates the pseudouridine at position 1915 (m3Psi1915) in 23S rRNA. This is Ribosomal RNA large subunit methyltransferase H from Streptococcus pyogenes serotype M12 (strain MGAS2096).